The following is a 337-amino-acid chain: Phosphate acyltransferase (337 aa).

Belongs to the PlsX family. Homodimer. Probably interacts with PlsY.

Its subcellular location is the cytoplasm. The enzyme catalyses a fatty acyl-[ACP] + phosphate = an acyl phosphate + holo-[ACP]. It participates in lipid metabolism; phospholipid metabolism. Its function is as follows. Catalyzes the reversible formation of acyl-phosphate (acyl-PO(4)) from acyl-[acyl-carrier-protein] (acyl-ACP). This enzyme utilizes acyl-ACP as fatty acyl donor, but not acyl-CoA. The polypeptide is Phosphate acyltransferase (Aquifex aeolicus (strain VF5)).